A 394-amino-acid chain; its full sequence is NAD(P)H-quinone oxidoreductase subunit H (394 aa).

This sequence belongs to the complex I 49 kDa subunit family. In terms of assembly, NDH-1 can be composed of about 15 different subunits; different subcomplexes with different compositions have been identified which probably have different functions.

It is found in the cellular thylakoid membrane. The enzyme catalyses a plastoquinone + NADH + (n+1) H(+)(in) = a plastoquinol + NAD(+) + n H(+)(out). The catalysed reaction is a plastoquinone + NADPH + (n+1) H(+)(in) = a plastoquinol + NADP(+) + n H(+)(out). Its function is as follows. NDH-1 shuttles electrons from an unknown electron donor, via FMN and iron-sulfur (Fe-S) centers, to quinones in the respiratory and/or the photosynthetic chain. The immediate electron acceptor for the enzyme in this species is believed to be plastoquinone. Couples the redox reaction to proton translocation, and thus conserves the redox energy in a proton gradient. Cyanobacterial NDH-1 also plays a role in inorganic carbon-concentration. The polypeptide is NAD(P)H-quinone oxidoreductase subunit H (Synechococcus sp. (strain WH7803)).